A 200-amino-acid polypeptide reads, in one-letter code: 3-isopropylmalate dehydratase small subunit (200 aa).

The protein belongs to the LeuD family. LeuD type 1 subfamily. As to quaternary structure, heterodimer of LeuC and LeuD.

The enzyme catalyses (2R,3S)-3-isopropylmalate = (2S)-2-isopropylmalate. Its pathway is amino-acid biosynthesis; L-leucine biosynthesis; L-leucine from 3-methyl-2-oxobutanoate: step 2/4. In terms of biological role, catalyzes the isomerization between 2-isopropylmalate and 3-isopropylmalate, via the formation of 2-isopropylmaleate. The protein is 3-isopropylmalate dehydratase small subunit of Yersinia pestis bv. Antiqua (strain Antiqua).